A 205-amino-acid polypeptide reads, in one-letter code: DNA-directed RNA polymerase RPB5 homolog (205 aa).

It belongs to the archaeal RpoH/eukaryotic RPB5 RNA polymerase subunit family. Part of the viral DNA-directed RNA polymerase that consists of 8 polII-like subunits (RPB1, RPB2, RPB3, RPB5, RPB6, RPB7, RPB9, RPB10), a capping enzyme and a termination factor.

It localises to the host cytoplasm. Its subcellular location is the virion. Functionally, component of the DNA-directed RNA polymerase (RNAP) that catalyzes the transcription in the cytoplasm of viral DNA into RNA using the four ribonucleoside triphosphates as substrates. This Ornithodoros (relapsing fever ticks) protein is DNA-directed RNA polymerase RPB5 homolog.